Consider the following 221-residue polypeptide: Holliday junction branch migration complex subunit RuvA (221 aa).

The domain I stretch occupies residues 1 to 61; that stretch reads MQIYQFGKIV…DYTKITYGFA (61 aa). The tract at residues 62–139 is domain II; that stretch reads SFRERILFED…RFNENHKNQT (78 aa). Residues 133–155 are disordered; the sequence is ENHKNQTEETNQDSQEKELEKKD. The tract at residues 140 to 166 is flexible linker; sequence EETNQDSQEKELEKKDDLADITIQKSN. A compositionally biased stretch (basic and acidic residues) spans 146–155; it reads SQEKELEKKD. The segment at 167–221 is domain III; sequence LEDKTAANLEDTLKMLGFKPRQIDYALTKVEPNENFENLIENAIKIISNAREFRN.

The protein belongs to the RuvA family. As to quaternary structure, homotetramer. Forms an RuvA(8)-RuvB(12)-Holliday junction (HJ) complex. HJ DNA is sandwiched between 2 RuvA tetramers; dsDNA enters through RuvA and exits via RuvB. An RuvB hexamer assembles on each DNA strand where it exits the tetramer. Each RuvB hexamer is contacted by two RuvA subunits (via domain III) on 2 adjacent RuvB subunits; this complex drives branch migration. In the full resolvosome a probable DNA-RuvA(4)-RuvB(12)-RuvC(2) complex forms which resolves the HJ.

The protein localises to the cytoplasm. The RuvA-RuvB-RuvC complex processes Holliday junction (HJ) DNA during genetic recombination and DNA repair, while the RuvA-RuvB complex plays an important role in the rescue of blocked DNA replication forks via replication fork reversal (RFR). RuvA specifically binds to HJ cruciform DNA, conferring on it an open structure. The RuvB hexamer acts as an ATP-dependent pump, pulling dsDNA into and through the RuvAB complex. HJ branch migration allows RuvC to scan DNA until it finds its consensus sequence, where it cleaves and resolves the cruciform DNA. The sequence is that of Holliday junction branch migration complex subunit RuvA from Mesomycoplasma hyopneumoniae (strain J / ATCC 25934 / NCTC 10110) (Mycoplasma hyopneumoniae).